We begin with the raw amino-acid sequence, 285 residues long: MKLCGFDVGLDRPFFLISGPCVVESEQLQMDVAGRLKEITAALGIPFIFKSSYDKANRSSGTSFRGPGMEKGLEILAKVRRDLQVPVLTDVHSEAEIPVVAQHVDVLQTPAFLCRQTDFIRAVAQSGKPVNIKKGQFLAPGDMKNVIQKARDAAREKGLPDDVFMACERGASFGYNNLVSDMRSLAIMRETGSPVVFDATHSVQLPGGQGTSSGGQREFVPVLSRAAIAVGVAGVFMETHPDPAKALSDGPNAVPLKHMKALLEQLVSIDRVIKAQPLLENDFSC.

The protein belongs to the KdsA family.

The protein localises to the cytoplasm. The enzyme catalyses D-arabinose 5-phosphate + phosphoenolpyruvate + H2O = 3-deoxy-alpha-D-manno-2-octulosonate-8-phosphate + phosphate. Its pathway is carbohydrate biosynthesis; 3-deoxy-D-manno-octulosonate biosynthesis; 3-deoxy-D-manno-octulosonate from D-ribulose 5-phosphate: step 2/3. It functions in the pathway bacterial outer membrane biogenesis; lipopolysaccharide biosynthesis. The protein is 2-dehydro-3-deoxyphosphooctonate aldolase of Methylibium petroleiphilum (strain ATCC BAA-1232 / LMG 22953 / PM1).